We begin with the raw amino-acid sequence, 292 residues long: Ribosomal protein L11 methyltransferase (292 aa).

Residues T136, G159, D181, and N228 each coordinate S-adenosyl-L-methionine.

The protein belongs to the methyltransferase superfamily. PrmA family.

Its subcellular location is the cytoplasm. The catalysed reaction is L-lysyl-[protein] + 3 S-adenosyl-L-methionine = N(6),N(6),N(6)-trimethyl-L-lysyl-[protein] + 3 S-adenosyl-L-homocysteine + 3 H(+). In terms of biological role, methylates ribosomal protein L11. In Agrobacterium fabrum (strain C58 / ATCC 33970) (Agrobacterium tumefaciens (strain C58)), this protein is Ribosomal protein L11 methyltransferase.